Here is a 180-residue protein sequence, read N- to C-terminus: Inner membrane-spanning protein YciB (180 aa).

5 consecutive transmembrane segments (helical) span residues 22 to 42, 50 to 70, 72 to 92, 121 to 141, and 149 to 169; these read IFVA…FTWF, MTLV…AFHS, LFIK…LLVS, MSWA…AFWL, and FKVF…GVYI.

The protein belongs to the YciB family.

It localises to the cell inner membrane. Functionally, plays a role in cell envelope biogenesis, maintenance of cell envelope integrity and membrane homeostasis. The chain is Inner membrane-spanning protein YciB from Yersinia enterocolitica serotype O:8 / biotype 1B (strain NCTC 13174 / 8081).